The sequence spans 459 residues: 3-carboxy-cis,cis-muconate cycloisomerase (459 aa).

Belongs to the class-II fumarase/aspartase family. In terms of assembly, homotetramer.

The protein localises to the cytoplasm. It catalyses the reaction 2-(carboxymethyl)-5-oxo-2,5-dihydro-2-furoate = 3-carboxy-cis,cis-muconate + H(+). It participates in aromatic compound metabolism; beta-ketoadipate pathway; 5-oxo-4,5-dihydro-2-furylacetate from 3-carboxy-cis,cis-muconate: step 1/2. In terms of biological role, catalyzes an anti cycloisomerization. The chain is 3-carboxy-cis,cis-muconate cycloisomerase (pcaB) from Pseudomonas aeruginosa (strain ATCC 15692 / DSM 22644 / CIP 104116 / JCM 14847 / LMG 12228 / 1C / PRS 101 / PAO1).